A 93-amino-acid chain; its full sequence is Small ribosomal subunit protein bS16 (93 aa).

Belongs to the bacterial ribosomal protein bS16 family.

In Dictyoglomus turgidum (strain DSM 6724 / Z-1310), this protein is Small ribosomal subunit protein bS16.